Reading from the N-terminus, the 158-residue chain is Cathelicidin-6 (158 aa).

A signal peptide spans 1–29 (METQRASLSLGRWSLWLLLLGLALPSASA). The propeptide occupies 30–131 (QALSYREAVL…NVTCEELQSV (102 aa)). 2 disulfides stabilise this stretch: Cys-86-Cys-97 and Cys-108-Cys-125.

The protein belongs to the cathelicidin family.

Its subcellular location is the secreted. Functionally, exerts a potent antimicrobial activity against Gram-negative and Gram-positive bacteria, including methicillin-resistant Staphylococcus aureus, and fungi. The sequence is that of Cathelicidin-6 (CATHL6) from Bos taurus (Bovine).